A 242-amino-acid chain; its full sequence is Glucosamine-6-phosphate deaminase (242 aa).

The active-site Proton acceptor; for enolization step is aspartate 67. Asparagine 136 acts as the For ring-opening step in catalysis. The Proton acceptor; for ring-opening step role is filled by histidine 138. Glutamate 143 functions as the For ring-opening step in the catalytic mechanism.

This sequence belongs to the glucosamine/galactosamine-6-phosphate isomerase family. NagB subfamily.

The enzyme catalyses alpha-D-glucosamine 6-phosphate + H2O = beta-D-fructose 6-phosphate + NH4(+). The protein operates within amino-sugar metabolism; N-acetylneuraminate degradation; D-fructose 6-phosphate from N-acetylneuraminate: step 5/5. Functionally, catalyzes the reversible isomerization-deamination of glucosamine 6-phosphate (GlcN6P) to form fructose 6-phosphate (Fru6P) and ammonium ion. This Clostridium perfringens (strain SM101 / Type A) protein is Glucosamine-6-phosphate deaminase.